Here is a 310-residue protein sequence, read N- to C-terminus: Deoxyribonuclease gamma (310 aa).

Residues 1–25 form the signal peptide; that stretch reads MSLYPASPYLASLLLFILALHGALS. Residues 40 to 56 carry the Bipartite nuclear localization signal motif; sequence KKENHNAMDIIVKIIKR. Active-site residues include glutamate 105 and histidine 160. Cysteine 199 and cysteine 236 form a disulfide bridge. The interval 289-310 is not required for free DNA-nuclease activity but required for activity towards liposome-coated DNA; the sequence is SRAFTNSRKSVSLKKKKKGSRS. The Nuclear localization signal motif lies at 301-307; the sequence is LKKKKKG.

The protein belongs to the DNase I family. Monomer. It depends on Ca(2+) as a cofactor. Requires Mg(2+) as cofactor. Seems to be synthesized as an inactive precursor protein and converted into an active mature enzyme by removal of the N-terminal precursor peptide during apoptosis. Post-translationally, poly-ADP-ribosylated by PARP1. ADP-ribosylation negatively regulates enzymatic activity during apoptosis. Detected at high levels in spleen, lymph nodes, thymus and liver. Observed also in kidney and testis, but not in brain or heart.

The protein localises to the nucleus. Its subcellular location is the secreted. Its activity is regulated as follows. Inhibited by zinc. In terms of biological role, has DNA hydrolytic activity. Is capable of both single- and double-stranded DNA cleavage, producing DNA fragments with 3'-OH ends. Can cleave chromatin to nucleosomal units and cleaves nucleosomal and liposome-coated DNA. Acts in internucleosomal DNA fragmentation (INDF) during apoptosis and necrosis. The role in apoptosis includes myogenic and neuronal differentiation, and BCR-mediated clonal deletion of self-reactive B cells. Is active on chromatin in apoptotic cell-derived membrane-coated microparticles and thus suppresses anti-DNA autoimmunity. Together with DNASE1, plays a key role in degrading neutrophil extracellular traps (NETs). NETs are mainly composed of DNA fibers and are released by neutrophils to bind pathogens during inflammation. Degradation of intravascular NETs by DNASE1 and DNASE1L3 is required to prevent formation of clots that obstruct blood vessels and cause organ damage following inflammation. This Rattus norvegicus (Rat) protein is Deoxyribonuclease gamma (Dnase1l3).